The primary structure comprises 172 residues: 3-hydroxydecanoyl-[acyl-carrier-protein] dehydratase (172 aa).

The active site involves His71.

Belongs to the thioester dehydratase family. FabA subfamily. In terms of assembly, homodimer.

The protein localises to the cytoplasm. The catalysed reaction is a (3R)-hydroxyacyl-[ACP] = a (2E)-enoyl-[ACP] + H2O. The enzyme catalyses (3R)-hydroxydecanoyl-[ACP] = (2E)-decenoyl-[ACP] + H2O. It catalyses the reaction (2E)-decenoyl-[ACP] = (3Z)-decenoyl-[ACP]. It participates in lipid metabolism; fatty acid biosynthesis. In terms of biological role, necessary for the introduction of cis unsaturation into fatty acids. Catalyzes the dehydration of (3R)-3-hydroxydecanoyl-ACP to E-(2)-decenoyl-ACP and then its isomerization to Z-(3)-decenoyl-ACP. Can catalyze the dehydratase reaction for beta-hydroxyacyl-ACPs with saturated chain lengths up to 16:0, being most active on intermediate chain length. The sequence is that of 3-hydroxydecanoyl-[acyl-carrier-protein] dehydratase from Blochmanniella floridana.